Reading from the N-terminus, the 158-residue chain is uncharacterized protein (158 aa).

The segment at 1 to 26 (MRASRSPPSPRRCHHHHEATGAASGA) is disordered.

This is an uncharacterized protein from Homo sapiens (Human).